We begin with the raw amino-acid sequence, 496 residues long: Lysine--tRNA ligase (496 aa).

The Mg(2+) site is built by Glu-409 and Glu-416.

This sequence belongs to the class-II aminoacyl-tRNA synthetase family. Homodimer. Mg(2+) is required as a cofactor.

The protein resides in the cytoplasm. It carries out the reaction tRNA(Lys) + L-lysine + ATP = L-lysyl-tRNA(Lys) + AMP + diphosphate. The chain is Lysine--tRNA ligase from Streptococcus mutans serotype c (strain ATCC 700610 / UA159).